Reading from the N-terminus, the 336-residue chain is Filaggrin (336 aa).

Positions 1 to 313 (PDGSGRSSNR…GVQGAAASGQ (313 aa)) are disordered. Composition is skewed to low complexity over residues 16–26 (QLSPSQSSDSQ), 40–66 (SSSA…LAAD), and 73–98 (ARQG…SSSA). Basic and acidic residues-rich tracts occupy residues 100 to 120 (RQGR…HSDF), 163 to 176 (DSQH…EQQR), and 184 to 195 (HQHEHEQPESGH). The segment covering 285-311 (AQRGQSSSANRRAGSSSGSGVQGAAAS) has biased composition (low complexity).

The protein belongs to the S100-fused protein family. Filaggrin is initially synthesized as a large, insoluble, highly phosphorylated precursor containing many tandem copies of 248 AA, which are not separated by large linker sequences. During terminal differentiation it is dephosphorylated and proteolytically cleaved. Expressed in the granular layer of the epidermis (at protein level). Expressed in the epidermis of the ear (at protein level).

It is found in the cytoplasmic granule. Its function is as follows. Aggregates keratin intermediate filaments and promotes disulfide-bond formation among the intermediate filaments during terminal differentiation of mammalian epidermis. The chain is Filaggrin (Flg) from Mus musculus (Mouse).